The primary structure comprises 129 residues: MVDVKCLSDYELHKHLMKLGFTPGPILPSTRKTYEKKLVQLLASPPWKPPVMKRPTRPHGSEDSDDSEGMLQDQVQGLSGDVSLKKTTLDATRDPRAAPHTRTPGTTFHARTLRTAFCGRAPRTTSHGA.

An LEM domain is found at 1–45; that stretch reads MVDVKCLSDYELHKHLMKLGFTPGPILPSTRKTYEKKLVQLLASP. The interval 45-129 is disordered; that stretch reads PPWKPPVMKR…RAPRTTSHGA (85 aa). Basic and acidic residues predominate over residues 83-97; the sequence is SLKKTTLDATRDPRA.

In Mus musculus (Mouse), this protein is LEM domain-containing protein 1 (Lemd1).